A 139-amino-acid chain; its full sequence is Small ribosomal subunit protein bS6 (139 aa).

Residues 95 to 121 (AVTEQSEMLKAEESRNERRERRERPND) are compositionally biased toward basic and acidic residues. The tract at residues 95–139 (AVTEQSEMLKAEESRNERRERRERPNDNAEGADGDDNSDSDNADE) is disordered. The span at 124–139 (EGADGDDNSDSDNADE) shows a compositional bias: acidic residues.

This sequence belongs to the bacterial ribosomal protein bS6 family.

Its function is as follows. Binds together with bS18 to 16S ribosomal RNA. This is Small ribosomal subunit protein bS6 from Pseudomonas aeruginosa (strain LESB58).